Here is a 248-residue protein sequence, read N- to C-terminus: Protein LIFEGUARD 3 (248 aa).

Transmembrane regions (helical) follow at residues 42-62 (VYSIIAFQLLATVAVAATVVT), 74-94 (GLGLALYIVIIITPLIVLCPL), 105-125 (YLLLGIFTLALAFVVGLTCAF), 130-150 (VILESVILTSVVVLSLTLYTF), 165-185 (FLFGALTVLIFFALIQILFPL), 188-208 (VSVMIYGCLVSIIFCGYIVYD), and 222-242 (IWAAVSLYLDIINLFLYLLTV).

Belongs to the BI1 family.

Its subcellular location is the membrane. This is Protein LIFEGUARD 3 from Arabidopsis thaliana (Mouse-ear cress).